A 330-amino-acid polypeptide reads, in one-letter code: DNA-directed RNA polymerase subunit alpha (330 aa).

Residues 1–236 form an alpha N-terminal domain (alpha-NTD) region; sequence MQGSVTEFLK…EQLDAFVDLR (236 aa). Residues 250-330 form an alpha C-terminal domain (alpha-CTD) region; sequence FDPILLRPVD…NWPPASIAED (81 aa).

The protein belongs to the RNA polymerase alpha chain family. In terms of assembly, homodimer. The RNAP catalytic core consists of 2 alpha, 1 beta, 1 beta' and 1 omega subunit. When a sigma factor is associated with the core the holoenzyme is formed, which can initiate transcription.

The catalysed reaction is RNA(n) + a ribonucleoside 5'-triphosphate = RNA(n+1) + diphosphate. DNA-dependent RNA polymerase catalyzes the transcription of DNA into RNA using the four ribonucleoside triphosphates as substrates. This is DNA-directed RNA polymerase subunit alpha from Vibrio parahaemolyticus serotype O3:K6 (strain RIMD 2210633).